The primary structure comprises 212 residues: MKQLFRQWYDLSEIKKELTTRNWFPATSGNISIKVSHEPLTFLITASGKDKTKTTPDDFLLVDHLGVPVLETELRPSAETILHTHIYNNTNAGCVLHIHTTDNNVITNLYSDAVTLQNQEIIKALDIWEEGATIHIPIIENHAHIPTLGENFRKHIQGDSGAVLIRNHGITVWGRDSFDAKKRLEAYEFLFQFHIKLLSIQGGVSNGANSYS.

Zn(2+) is bound by residues His-97 and His-99.

The protein belongs to the aldolase class II family. MtnB subfamily. As to quaternary structure, homotetramer. Zn(2+) serves as cofactor.

It catalyses the reaction 5-(methylsulfanyl)-D-ribulose 1-phosphate = 5-methylsulfanyl-2,3-dioxopentyl phosphate + H2O. Its pathway is amino-acid biosynthesis; L-methionine biosynthesis via salvage pathway; L-methionine from S-methyl-5-thio-alpha-D-ribose 1-phosphate: step 2/6. In terms of biological role, catalyzes the dehydration of methylthioribulose-1-phosphate (MTRu-1-P) into 2,3-diketo-5-methylthiopentyl-1-phosphate (DK-MTP-1-P). The polypeptide is Methylthioribulose-1-phosphate dehydratase (Bacillus cereus (strain ZK / E33L)).